Consider the following 459-residue polypeptide: tRNA modification GTPase MnmE (459 aa).

(6S)-5-formyl-5,6,7,8-tetrahydrofolate is bound by residues R22, E85, and R124. Positions 221–380 (GLSTVIVGKP…LEIQIRDLFF (160 aa)) constitute a TrmE-type G domain. Residue N231 coordinates K(+). GTP-binding positions include 231–236 (NVGKSS), 250–256 (TEVAGTT), and 275–278 (DTAG). Mg(2+) is bound at residue S235. The K(+) site is built by T250, V252, and T255. Mg(2+) is bound at residue T256. K459 provides a ligand contact to (6S)-5-formyl-5,6,7,8-tetrahydrofolate.

The protein belongs to the TRAFAC class TrmE-Era-EngA-EngB-Septin-like GTPase superfamily. TrmE GTPase family. In terms of assembly, homodimer. Heterotetramer of two MnmE and two MnmG subunits. Requires K(+) as cofactor.

It localises to the cytoplasm. In terms of biological role, exhibits a very high intrinsic GTPase hydrolysis rate. Involved in the addition of a carboxymethylaminomethyl (cmnm) group at the wobble position (U34) of certain tRNAs, forming tRNA-cmnm(5)s(2)U34. The chain is tRNA modification GTPase MnmE from Staphylococcus aureus (strain MW2).